The following is a 64-amino-acid chain: VRDAYIAKPHNCVYECARNEYCNNLCTKNGAKSGYCQWSGKYGNGCWCIELPDNVPIRVPGKCH.

Residues 2–64 (RDAYIAKPHN…VPIRVPGKCH (63 aa)) enclose the LCN-type CS-alpha/beta domain. Intrachain disulfides connect Cys-12-Cys-63, Cys-16-Cys-36, Cys-22-Cys-46, and Cys-26-Cys-48.

The protein belongs to the long (4 C-C) scorpion toxin superfamily. Sodium channel inhibitor family. Alpha subfamily. Expressed by the venom gland.

It localises to the secreted. In terms of biological role, alpha toxins bind voltage-independently at site-3 of sodium channels (Nav) and inhibit the inactivation of the activated channels, thereby blocking neuronal transmission. This toxin is active against both mammals and insects, and is classified as an alpha-like toxin. The polypeptide is Alpha-like toxin BmK M2 (Olivierus martensii (Manchurian scorpion)).